The following is a 381-amino-acid chain: Creatine kinase M-type (381 aa).

Residues lysine 11–glycine 98 form the Phosphagen kinase N-terminal domain. The 243-residue stretch at tyrosine 125 to leucine 367 folds into the Phosphagen kinase C-terminal domain. Serine 128 to arginine 132 contacts ATP. Serine 164 is subject to Phosphoserine. Position 166 is a phosphothreonine (threonine 166). Residue serine 178 is modified to Phosphoserine. Threonine 180 carries the post-translational modification Phosphothreonine. Residue histidine 191 participates in ATP binding. At serine 199 the chain carries Phosphoserine. The ATP site is built by arginine 236 and arginine 292. A phosphothreonine mark is found at threonine 313 and threonine 322. Residues arginine 320–valine 325 and aspartate 335 contribute to the ATP site. Residue serine 372 is modified to Phosphoserine.

This sequence belongs to the ATP:guanido phosphotransferase family. As to quaternary structure, dimer of identical or non-identical chains, which can be either B (brain type) or M (muscle type). With MM being the major form in skeletal muscle and myocardium, MB existing in myocardium, and BB existing in many tissues, especially brain.

It carries out the reaction creatine + ATP = N-phosphocreatine + ADP + H(+). In terms of biological role, reversibly catalyzes the transfer of phosphate between ATP and various phosphogens (e.g. creatine phosphate). Creatine kinase isoenzymes play a central role in energy transduction in tissues with large, fluctuating energy demands, such as skeletal muscle, heart, brain and spermatozoa. This is Creatine kinase M-type (CKM) from Sus scrofa (Pig).